A 283-amino-acid polypeptide reads, in one-letter code: Urease accessory protein UreD 1 (283 aa).

The protein belongs to the UreD family. In terms of assembly, ureD, UreF and UreG form a complex that acts as a GTP-hydrolysis-dependent molecular chaperone, activating the urease apoprotein by helping to assemble the nickel containing metallocenter of UreC. The UreE protein probably delivers the nickel.

It is found in the cytoplasm. In terms of biological role, required for maturation of urease via the functional incorporation of the urease nickel metallocenter. The chain is Urease accessory protein UreD 1 from Brucella anthropi (strain ATCC 49188 / DSM 6882 / CCUG 24695 / JCM 21032 / LMG 3331 / NBRC 15819 / NCTC 12168 / Alc 37) (Ochrobactrum anthropi).